The following is a 189-amino-acid chain: Translation machinery-associated protein 22 (189 aa).

The SUI1 domain occupies 94–165 (VTIKRIERNK…EAKDYIEKLL (72 aa)).

It belongs to the DENR family. In terms of assembly, interacts with the 40S ribosomal subunit.

It is found in the cytoplasm. The sequence is that of Translation machinery-associated protein 22 (TMA22) from Debaryomyces hansenii (strain ATCC 36239 / CBS 767 / BCRC 21394 / JCM 1990 / NBRC 0083 / IGC 2968) (Yeast).